Reading from the N-terminus, the 232-residue chain is Large ribosomal subunit protein uL1 (232 aa).

Belongs to the universal ribosomal protein uL1 family. As to quaternary structure, part of the 50S ribosomal subunit.

Functionally, binds directly to 23S rRNA. The L1 stalk is quite mobile in the ribosome, and is involved in E site tRNA release. Protein L1 is also a translational repressor protein, it controls the translation of the L11 operon by binding to its mRNA. This Methylobacterium radiotolerans (strain ATCC 27329 / DSM 1819 / JCM 2831 / NBRC 15690 / NCIMB 10815 / 0-1) protein is Large ribosomal subunit protein uL1.